Consider the following 634-residue polypeptide: Mitochondrial Rho GTPase 1 (634 aa).

Residues 1 to 604 (MLCCMRICVC…PRSEEDVEGK (604 aa)) are Cytoplasmic-facing. The Miro 1 domain maps to 2 to 171 (LCCMRICVCG…FFLCQKAVTH (170 aa)). GTP contacts are provided by residues 11 to 18 (GDEGTGKS), 60 to 64 (DTSAV), and 116 to 119 (NKSD). EF-hand domains are found at residues 187–222 (AAVAALQRIFYLSDKDRDGYLSDKEIKDFQMRCFEK) and 307–342 (EGYRFFVNLFLLSDKDNDGGLNDAELASLFAPTPGL). Residues Asp200, Asp202, Asp204, Tyr206, Glu211, Asp320, Asp322, Asp324, and Glu331 each coordinate Ca(2+). Residues 399–419 (NPSTTAALKVTRPRKRRKRPG) form a disordered region. Residues 409–419 (TRPRKRRKRPG) show a composition bias toward basic residues. Residues 423–589 (RNVVLGHIVG…FVHIAEAAME (167 aa)) form the Miro 2 domain. Residues 432–439 (GAPGSGKS), 468–472 (ELPGG), and 538–541 (LKAD) each bind GTP. A helical; Anchor for type IV membrane protein transmembrane segment spans residues 605-625 (WMSWGIALGAVVCAGAAAVMI). The Mitochondrial intermembrane segment spans residues 626-634 (WRRVSGSGV).

This sequence belongs to the mitochondrial Rho GTPase family.

Its subcellular location is the mitochondrion outer membrane. Functionally, mitochondrial GTPase involved in mitochondrial trafficking. Probably involved in control of anterograde transport of mitochondria and their subcellular distribution. The sequence is that of Mitochondrial Rho GTPase 1 (gem1) from Emericella nidulans (strain FGSC A4 / ATCC 38163 / CBS 112.46 / NRRL 194 / M139) (Aspergillus nidulans).